We begin with the raw amino-acid sequence, 444 residues long: Nuclear envelope integral membrane protein 1 (444 aa).

Positions 1–43 (MAGGMKVAVSPAVGPGPWGSGVGGGGTVRLLLILSGCLVYGTA) are cleaved as a signal peptide. A glycan (N-linked (GlcNAc...) asparagine) is linked at Asn-125. 5 consecutive transmembrane segments (helical) span residues 161-181 (PKLF…DLLS), 186-206 (FYYS…IIFI), 216-236 (PIYV…QLVF), 245-265 (CYWQ…FAVC), and 289-309 (LCFM…IIIA). The tract at residues 186-297 (FYYSTGMTVG…GLCFMYSGIQ (112 aa)) is a; required for its colocalization with lamins at the nuclear envelope. Residues 336–405 (PVPPRLLTEE…LTPNEVSVHE (70 aa)) form a b; required for interaction with RAN-GTP region. A required for nuclear localization region spans residues 336-444 (PVPPRLLTEE…PAITQNNFLT (109 aa)). Phosphoserine is present on residues Ser-368, Ser-424, and Ser-425.

Belongs to the NEMP family. Homooligomer. Interacts with RAN-GTP. Interacts with EMD. In terms of processing, phosphorylation may regulate its interaction with RAN-GTP.

Its subcellular location is the nucleus inner membrane. The protein localises to the nucleus envelope. Functionally, together with EMD, contributes to nuclear envelope stiffness in germ cells. Required for female fertility. Essential for normal erythropoiesis. Required for efficient nuclear envelope opening and enucleation during the late stages of erythroblast maturation. This chain is Nuclear envelope integral membrane protein 1 (NEMP1), found in Homo sapiens (Human).